The sequence spans 151 residues: Ribosome maturation factor RimP (151 aa).

This sequence belongs to the RimP family.

Its subcellular location is the cytoplasm. Its function is as follows. Required for maturation of 30S ribosomal subunits. In Hydrogenovibrio crunogenus (strain DSM 25203 / XCL-2) (Thiomicrospira crunogena), this protein is Ribosome maturation factor RimP.